We begin with the raw amino-acid sequence, 280 residues long: Energy-coupling factor transporter ATP-binding protein EcfA1 (280 aa).

The 236-residue stretch at I6 to D241 folds into the ABC transporter domain. G41–S48 lines the ATP pocket.

It belongs to the ABC transporter superfamily. Energy-coupling factor EcfA family. Forms a stable energy-coupling factor (ECF) transporter complex composed of 2 membrane-embedded substrate-binding proteins (S component), 2 ATP-binding proteins (A component) and 2 transmembrane proteins (T component).

It localises to the cell membrane. Its function is as follows. ATP-binding (A) component of a common energy-coupling factor (ECF) ABC-transporter complex. Unlike classic ABC transporters this ECF transporter provides the energy necessary to transport a number of different substrates. This Streptococcus mutans serotype c (strain ATCC 700610 / UA159) protein is Energy-coupling factor transporter ATP-binding protein EcfA1.